A 222-amino-acid polypeptide reads, in one-letter code: N-(5'-phosphoribosyl)anthranilate isomerase (222 aa).

Belongs to the TrpF family.

It catalyses the reaction N-(5-phospho-beta-D-ribosyl)anthranilate = 1-(2-carboxyphenylamino)-1-deoxy-D-ribulose 5-phosphate. Its pathway is amino-acid biosynthesis; L-tryptophan biosynthesis; L-tryptophan from chorismate: step 3/5. The protein is N-(5'-phosphoribosyl)anthranilate isomerase of Rhizobium etli (strain CIAT 652).